The primary structure comprises 191 residues: Adenylate kinase (191 aa).

11-16 (GAGKGT) lines the ATP pocket. Residues 31-60 (STGDILRSNVAERSPLGIKAKDYMDKGDLV) form an NMP region. AMP is bound by residues Thr-32, Arg-37, 58–60 (DLV), 86–89 (GFPR), and Gln-93. Positions 132–138 (SRKREDD) are LID. Arg-133 serves as a coordination point for ATP. The AMP site is built by Arg-135 and Arg-146. ATP is bound at residue Asn-174.

It belongs to the adenylate kinase family. In terms of assembly, monomer.

The protein resides in the cytoplasm. The enzyme catalyses AMP + ATP = 2 ADP. It functions in the pathway purine metabolism; AMP biosynthesis via salvage pathway; AMP from ADP: step 1/1. Its function is as follows. Catalyzes the reversible transfer of the terminal phosphate group between ATP and AMP. Plays an important role in cellular energy homeostasis and in adenine nucleotide metabolism. This Trichodesmium erythraeum (strain IMS101) protein is Adenylate kinase.